The sequence spans 233 residues: NAD(P)H-hydrate epimerase (233 aa).

The 208-residue stretch at 10-217 (AINVDLELFN…ALQRKYELNL (208 aa)) folds into the YjeF N-terminal domain. Residue 60–64 (NNGGD) coordinates (6S)-NADPHX. Asn61 and Asp125 together coordinate K(+). Residues 129 to 135 (GFSFKPP) and Asp158 each bind (6S)-NADPHX. Ser161 serves as a coordination point for K(+).

Belongs to the NnrE/AIBP family. Requires K(+) as cofactor.

It carries out the reaction (6R)-NADHX = (6S)-NADHX. It catalyses the reaction (6R)-NADPHX = (6S)-NADPHX. Functionally, catalyzes the epimerization of the S- and R-forms of NAD(P)HX, a damaged form of NAD(P)H that is a result of enzymatic or heat-dependent hydration. This is a prerequisite for the S-specific NAD(P)H-hydrate dehydratase to allow the repair of both epimers of NAD(P)HX. In Drosophila grimshawi (Hawaiian fruit fly), this protein is NAD(P)H-hydrate epimerase.